The following is a 218-amino-acid chain: Ras-related protein Rab-4A (218 aa).

Positions 23, 24, 25, 26, 27, and 28 each coordinate GDP. Residues Gly23, Thr24, Gly25, Lys26, Ser27, Cys28, Ser42, His44, and Thr45 each contribute to the GTP site. Ser27 lines the Mg(2+) pocket. The Switch 1 signature appears at 44–49; it reads HTIGVE. Residues Thr45 and Asp68 each contribute to the Mg(2+) site. The Switch 2 signature appears at 70-79; the sequence is AGQERFRSVT. Gly71 contributes to the GTP binding site. 5-glutamyl serotonin is present on Gln72. Residues Asn126, Lys127, Asp129, Ala157, and Leu158 each contribute to the GDP site. Positions 126, 127, 129, 157, and 158 each coordinate GTP. Ser190 carries the phosphoserine modification. Position 204 is a phosphoserine; by CDK1 (Ser204). S-geranylgeranyl cysteine attachment occurs at residues Cys216 and Cys218. Position 218 is a cysteine methyl ester (Cys218).

This sequence belongs to the small GTPase superfamily. Rab family. As to quaternary structure, interacts with SGSM1, SGSM2 and SGSM3. Interacts with RAB11FIP1, RABEP1, ZFYVE20 and RUFY1. Interacts (membrane-bound form) with NDRG1; the interaction involves NDRG1 in vesicular recycling of E-cadherin. Interacts (in GTP-bound form) with GRIPAP1 (via N-terminus). Interacts with RABEP1 and RBSN. Does not interact with HPS4. Interacts with RABEP2; this interaction may mediate VEGFR2 cell surface expression. It depends on Mg(2+) as a cofactor. Post-translationally, phosphorylated by CDK1 kinase during mitosis. Serotonylation of Gln-72 by TGM2 during activation and aggregation of platelets leads to constitutive activation of GTPase activity.

It is found in the membrane. The protein localises to the cytoplasm. The protein resides in the early endosome membrane. It localises to the recycling endosome membrane. The catalysed reaction is GTP + H2O = GDP + phosphate + H(+). Its activity is regulated as follows. Regulated by guanine nucleotide exchange factors (GEFs) which promote the exchange of bound GDP for free GTP. Regulated by GTPase activating proteins (GAPs) which increase the GTP hydrolysis activity. Inhibited by GDP dissociation inhibitors (GDIs). Its function is as follows. The small GTPases Rab are key regulators of intracellular membrane trafficking, from the formation of transport vesicles to their fusion with membranes. Rabs cycle between an inactive GDP-bound form and an active GTP-bound form that is able to recruit to membranes different sets of downstream effectors directly responsible for vesicle formation, movement, tethering and fusion. RAB4A is involved in protein transport. Also plays a role in vesicular traffic. Mediates VEGFR2 endosomal trafficking to enhance VEGFR2 signaling. Acts as a regulator of platelet alpha-granule release during activation and aggregation of platelets. In Homo sapiens (Human), this protein is Ras-related protein Rab-4A.